The primary structure comprises 1051 residues: Ubiquitin-activating enzyme E1 2 (1051 aa).

Residues 1-32 (MLPRKREIVAGEVEDLQKKTRAGEGEATREEG) are compositionally biased toward basic and acidic residues. The tract at residues 1 to 42 (MLPRKREIVAGEVEDLQKKTRAGEGEATREEGDAAMAGRGNE) is disordered. 2 tandem repeats follow at residues 56–194 (GRET…GSVF) and 453–605 (GSTL…QMVI). Positions 56 to 605 (GRETMKPLFG…GAKCNTQMVI (550 aa)) are 2 approximate repeats. ATP is bound by residues Ala-472, Asp-498, Arg-509, Lys-522, and 570 to 571 (DN). Residue Cys-626 is the Glycyl thioester intermediate of the active site.

Belongs to the ubiquitin-activating E1 family. Monomer.

The enzyme catalyses ATP + ubiquitin + [E1 ubiquitin-activating enzyme]-L-cysteine = AMP + diphosphate + S-ubiquitinyl-[E1 ubiquitin-activating enzyme]-L-cysteine.. It functions in the pathway protein modification; protein ubiquitination. Functionally, activates ubiquitin by first adenylating its C-terminal glycine residue with ATP, and thereafter linking this residue to the side chain of a cysteine residue in E1, yielding a ubiquitin-E1 thioester and free AMP. This Triticum aestivum (Wheat) protein is Ubiquitin-activating enzyme E1 2 (UBA2).